Consider the following 312-residue polypeptide: Protoheme IX farnesyltransferase (312 aa).

A run of 8 helical transmembrane segments spans residues 33–53, 54–74, 105–125, 126–146, 154–174, 181–201, 243–263, and 291–311; these read VMLL…VSIN, PLYG…AGAL, FIFG…FVNW, FAAL…TIWL, IVIG…AATG, FLLF…LSLF, IIGF…IIFI, and FYLA…CFII.

The protein belongs to the UbiA prenyltransferase family. Protoheme IX farnesyltransferase subfamily.

The protein localises to the cell inner membrane. It carries out the reaction heme b + (2E,6E)-farnesyl diphosphate + H2O = Fe(II)-heme o + diphosphate. It participates in porphyrin-containing compound metabolism; heme O biosynthesis; heme O from protoheme: step 1/1. Converts heme B (protoheme IX) to heme O by substitution of the vinyl group on carbon 2 of heme B porphyrin ring with a hydroxyethyl farnesyl side group. The sequence is that of Protoheme IX farnesyltransferase from Bartonella henselae (strain ATCC 49882 / DSM 28221 / CCUG 30454 / Houston 1) (Rochalimaea henselae).